Here is a 146-residue protein sequence, read N- to C-terminus: Hemoglobin subunit beta (146 aa).

Valine 1 carries the N-acetylvaline modification. Residues 2 to 146 form the Globin domain; the sequence is HLSGEEKTAL…VANALAHKYH (145 aa). Serine 44 carries the phosphoserine modification. The residue at position 59 (lysine 59) is an N6-acetyllysine. Histidine 63 contacts heme b. N6-acetyllysine is present on lysine 82. Histidine 92 is a heme b binding site. Residue cysteine 93 is modified to S-nitrosocysteine. The residue at position 144 (lysine 144) is an N6-acetyllysine.

This sequence belongs to the globin family. As to quaternary structure, heterotetramer of two alpha chains and two beta chains. Red blood cells.

Functionally, involved in oxygen transport from the lung to the various peripheral tissues. This chain is Hemoglobin subunit beta, found in Tamiasciurus hudsonicus (American red squirrel).